The primary structure comprises 298 residues: Beta-soluble NSF attachment protein (298 aa).

This sequence belongs to the SNAP family. As to quaternary structure, interacts with PRKCABP, and disrupts the interaction between GRIA2 and PRKCABP, leading to the internalization of GRIA2. Brain.

The protein localises to the membrane. Functionally, required for vesicular transport between the endoplasmic reticulum and the Golgi apparatus. This chain is Beta-soluble NSF attachment protein (NAPB), found in Bos taurus (Bovine).